The following is a 365-amino-acid chain: tRNA(Met) cytidine acetate ligase (365 aa).

ATP contacts are provided by residues 7-20, glycine 96, asparagine 152, and arginine 175; that span reads IAEF…HKYL.

This sequence belongs to the TmcAL family.

It localises to the cytoplasm. It carries out the reaction cytidine(34) in elongator tRNA(Met) + acetate + ATP = N(4)-acetylcytidine(34) in elongator tRNA(Met) + AMP + diphosphate. In terms of biological role, catalyzes the formation of N(4)-acetylcytidine (ac(4)C) at the wobble position of elongator tRNA(Met), using acetate and ATP as substrates. First activates an acetate ion to form acetyladenylate (Ac-AMP) and then transfers the acetyl group to tRNA to form ac(4)C34. In Streptococcus pneumoniae (strain P1031), this protein is tRNA(Met) cytidine acetate ligase.